The chain runs to 383 residues: Succinyl-diaminopimelate desuccinylase (383 aa).

His73 contacts Zn(2+). Asp75 is an active-site residue. Position 107 (Asp107) interacts with Zn(2+). Glu141 acts as the Proton acceptor in catalysis. Glu142, Glu170, and His356 together coordinate Zn(2+).

The protein belongs to the peptidase M20A family. DapE subfamily. In terms of assembly, homodimer. Zn(2+) is required as a cofactor. Co(2+) serves as cofactor.

It carries out the reaction N-succinyl-(2S,6S)-2,6-diaminopimelate + H2O = (2S,6S)-2,6-diaminopimelate + succinate. It functions in the pathway amino-acid biosynthesis; L-lysine biosynthesis via DAP pathway; LL-2,6-diaminopimelate from (S)-tetrahydrodipicolinate (succinylase route): step 3/3. Its function is as follows. Catalyzes the hydrolysis of N-succinyl-L,L-diaminopimelic acid (SDAP), forming succinate and LL-2,6-diaminopimelate (DAP), an intermediate involved in the bacterial biosynthesis of lysine and meso-diaminopimelic acid, an essential component of bacterial cell walls. In Pseudomonas putida (strain W619), this protein is Succinyl-diaminopimelate desuccinylase.